Here is a 302-residue protein sequence, read N- to C-terminus: uncharacterized protein (302 aa).

Disordered stretches follow at residues 1–167 and 180–199; these read MPCR…QSSE and PSLC…QRAS. Over residues 39–54 the composition is skewed to basic and acidic residues; that stretch reads EESHAPSRDPRDHQGS. 2 stretches are compositionally biased toward polar residues: residues 123–133 and 183–197; these read LSTSSCASVSR and CPSQ…SPQR.

This is an uncharacterized protein from Homo sapiens (Human).